Reading from the N-terminus, the 126-residue chain is Glycine cleavage system H protein (126 aa).

Residues 22–104 (VATIGITEYA…YEKAWMVKVE (83 aa)) enclose the Lipoyl-binding domain. N6-lipoyllysine is present on lysine 63.

Belongs to the GcvH family. As to quaternary structure, the glycine cleavage system is composed of four proteins: P, T, L and H. (R)-lipoate is required as a cofactor.

Its function is as follows. The glycine cleavage system catalyzes the degradation of glycine. The H protein shuttles the methylamine group of glycine from the P protein to the T protein. In terms of biological role, is also involved in protein lipoylation via its role as an octanoyl/lipoyl carrier protein intermediate. The sequence is that of Glycine cleavage system H protein from Staphylococcus aureus (strain JH1).